A 127-amino-acid polypeptide reads, in one-letter code: Small ribosomal subunit protein uS12 (127 aa).

Residues 1–28 (MPTIQQLIRDERSKAKRKTKSPALKQCP) form a disordered region. At Asp-89 the chain carries 3-methylthioaspartic acid. The segment at 104 to 127 (ATGVKNRQKARSKYGTKRPKPAAK) is disordered. Residues 109–127 (NRQKARSKYGTKRPKPAAK) show a composition bias toward basic residues.

Belongs to the universal ribosomal protein uS12 family. In terms of assembly, part of the 30S ribosomal subunit. Contacts proteins S8 and S17. May interact with IF1 in the 30S initiation complex.

In terms of biological role, with S4 and S5 plays an important role in translational accuracy. Interacts with and stabilizes bases of the 16S rRNA that are involved in tRNA selection in the A site and with the mRNA backbone. Located at the interface of the 30S and 50S subunits, it traverses the body of the 30S subunit contacting proteins on the other side and probably holding the rRNA structure together. The combined cluster of proteins S8, S12 and S17 appears to hold together the shoulder and platform of the 30S subunit. The chain is Small ribosomal subunit protein uS12 from Microcystis aeruginosa (strain NIES-843 / IAM M-2473).